We begin with the raw amino-acid sequence, 270 residues long: Probable feruloyl esterase C (270 aa).

The first 21 residues, 1 to 21 (MIKSIILQAIMVLSTLTSVHG), serve as a signal peptide directing secretion. N-linked (GlcNAc...) asparagine glycosylation is present at asparagine 23.

It belongs to the faeC family.

The protein localises to the secreted. It carries out the reaction feruloyl-polysaccharide + H2O = ferulate + polysaccharide.. Involved in degradation of plant cell walls. Hydrolyzes the feruloyl-arabinose ester bond in arabinoxylans, and the feruloyl-galactose ester bond in pectin. Active against paranitrophenyl-acetate, methyl ferulate and wheat arabinoxylan. This Aspergillus oryzae (strain ATCC 42149 / RIB 40) (Yellow koji mold) protein is Probable feruloyl esterase C (faeC).